Reading from the N-terminus, the 453-residue chain is Magnesium transporter MgtE (453 aa).

At 1–286 (MNEGQEMEEQ…ENPLKAASKR (286 aa)) the chain is on the cytoplasmic side. Residues E71, D98, D102, E136, A140, Y176, R227, D230, A233, D251, and E259 each coordinate Mg(2+). 2 consecutive CBS domains span residues 142–205 (MTTE…IADI) and 206–262 (LNER…EAAS). Residues 287–307 (LPWLITLLFLGMSTASLISNY) form a helical membrane-spanning segment. A topological domain (extracellular) is located at residue E308. Residues 309–329 (SLVSEASILAVFISLITGTAG) traverse the membrane as a helical segment. At 330–360 (NAGTQSLAVAVRRLAMKDEKDSNFGRLILSE) the chain is on the cytoplasmic side. Residues 361–381 (VLTGLVTGAVTGLTIMIVVGV) form a helical membrane-spanning segment. The Extracellular segment spans residues 382-389 (WQHNLPLG). A helical transmembrane segment spans residues 390-410 (FVIGMAMLCAITVANLAGSLI). Residues 411 to 427 (PMLMDKLGFDPAVASGP) lie on the Cytoplasmic side of the membrane. Residues 428 to 448 (FITTLSDLTSVLIYFNIASMF) form a helical membrane-spanning segment. D434 serves as a coordination point for Mg(2+). The Extracellular portion of the chain corresponds to 449 to 453 (MRYFV).

It belongs to the SLC41A transporter family. As to quaternary structure, homodimer.

It localises to the cell membrane. The catalysed reaction is Mg(2+)(in) = Mg(2+)(out). Acts as a magnesium transporter. This Enterococcus faecalis (strain ATCC 700802 / V583) protein is Magnesium transporter MgtE.